We begin with the raw amino-acid sequence, 148 residues long: Protein J1 homolog (148 aa).

Belongs to the chordopoxvirinae J1 family. As to quaternary structure, homodimer. Part of a complex composed of A30, G7, F10 kinase, A15, D2, D3, and J1. Interacts with A45.

The protein localises to the virion. It localises to the host cytoplasm. In terms of biological role, late protein which is a part of a large complex required for early virion morphogenesis. This complex participates in the formation of virosomes and the incorporation of virosomal contents into nascent immature virions. J1 protein is required for DNA packaging during immature virions (IV) formation. The protein is Protein J1 homolog of Fowlpox virus (strain NVSL) (FPV).